Here is an 81-residue protein sequence, read N- to C-terminus: Cytoplasmic envelopment protein 3 (81 aa).

The N-myristoyl glycine; by host moiety is linked to residue Gly2. Residues 22 to 23 (LV) carry the Di-leucine-like internalization motif motif. The interval 41–47 (DFDENVT) is asp/Glu-rich (acidic). Residues 47–81 (TEDADKSTQRRPRVIDVTPKRKPSGKSSHSKCAKC) form a disordered region. Residues 66–81 (KRKPSGKSSHSKCAKC) show a composition bias toward basic residues.

The protein belongs to the herpesviridae cytoplasmic envelopment protein 3 family. Interacts with cytoplasmic envelopment protein 2; this interaction is essential for the proper localization of each protein to the assembly complex and thus for the production of infectious virus. Myristoylation and palmitoylation (probably on one or more of the nearby cysteines at the N-terminus) enable membrane-binding and Golgi apparatus-specific targeting and are essential for efficient packaging. Post-translationally, phosphorylated. Phosphorylation does not seem to be required for recycling to the host Golgi apparatus. Packaging is selective for underphosphorylated forms.

Its subcellular location is the virion tegument. The protein resides in the virion membrane. The protein localises to the host cell membrane. It localises to the host Golgi apparatus membrane. Functionally, plays an important role in the cytoplasmic envelopment of tegument proteins and capsids during the assembly and egress processes. Also participates in viral entry at the fusion step probably by regulating the core fusion machinery. This is Cytoplasmic envelopment protein 3 from Homo sapiens (Human).